The sequence spans 416 residues: Serine hydroxymethyltransferase (416 aa).

(6S)-5,6,7,8-tetrahydrofolate is bound by residues Leu118 and 122–124 (GHL). The residue at position 226 (Lys226) is an N6-(pyridoxal phosphate)lysine. (6S)-5,6,7,8-tetrahydrofolate is bound at residue Glu242.

The protein belongs to the SHMT family. Homodimer. The cofactor is pyridoxal 5'-phosphate.

Its subcellular location is the cytoplasm. It catalyses the reaction (6R)-5,10-methylene-5,6,7,8-tetrahydrofolate + glycine + H2O = (6S)-5,6,7,8-tetrahydrofolate + L-serine. The protein operates within one-carbon metabolism; tetrahydrofolate interconversion. Its pathway is amino-acid biosynthesis; glycine biosynthesis; glycine from L-serine: step 1/1. Catalyzes the reversible interconversion of serine and glycine with tetrahydrofolate (THF) serving as the one-carbon carrier. This reaction serves as the major source of one-carbon groups required for the biosynthesis of purines, thymidylate, methionine, and other important biomolecules. Also exhibits THF-independent aldolase activity toward beta-hydroxyamino acids, producing glycine and aldehydes, via a retro-aldol mechanism. The polypeptide is Serine hydroxymethyltransferase (Helicobacter pylori (strain HPAG1)).